The following is a 442-amino-acid chain: Vitellogenin-2 (442 aa).

Residues 1 to 19 (MNPLRTLCVMACLLAVAMG) form the signal peptide. A compositionally biased stretch (low complexity) spans 21–33 (PQSGNRSGRRSNS). Residues 21–44 (PQSGNRSGRRSNSLDNVEQPSNWV) are disordered. 2 positions are modified to phosphoserine: serine 31 and serine 33. Over residues 34–44 (LDNVEQPSNWV) the composition is skewed to polar residues. At serine 82 the chain carries Phosphoserine. Disordered regions lie at residues 165–200 (QPYE…QDDT) and 408–442 (KSPF…SRRQ). Threonine 170 carries the phosphothreonine modification. Position 172 is a sulfotyrosine (tyrosine 172). Phosphoserine is present on residues serine 173, serine 178, serine 181, serine 182, and serine 183. 2 stretches are compositionally biased toward low complexity: residues 175–186 (EEQSQRSSSEEQ) and 431–442 (RQSSSNQGSRRQ).

It belongs to the AB hydrolase superfamily. Lipase family. Tyrosine sulfation occurs in the female only and plays an essential functional role. Synthesized in the fat body and ovarian follicle cells and accumulate in the oocyte.

The protein localises to the secreted. Vitellogenin is the major yolk protein of eggs where it is used as a food source during embryogenesis. Vitellogenins and their receptor yl/yolkless are required for maintenance of microtubule plus-end orientation towards the posterior pole of oocytes. Involved in polarized localization of germ plasm components, such as osk mRNA and vas protein, to the oocyte posterior cortex. Receptor-mediated endocytosis by yl/yolkless is crucial for actin reorganization, mediated by osk isoform A/Long, required to anchor germ plasm components to the oocyte cortex. The polypeptide is Vitellogenin-2 (Yp2) (Drosophila melanogaster (Fruit fly)).